Reading from the N-terminus, the 450-residue chain is Histidinol dehydrogenase (450 aa).

Residues Tyr135, Gln197, and Asn225 each contribute to the NAD(+) site. Substrate-binding residues include Thr248, Gln270, and His273. 2 residues coordinate Zn(2+): Gln270 and His273. Catalysis depends on proton acceptor residues Glu339 and His340. His340, Asp373, Glu427, and His432 together coordinate substrate. Residue Asp373 participates in Zn(2+) binding. A Zn(2+)-binding site is contributed by His432.

This sequence belongs to the histidinol dehydrogenase family. The cofactor is Zn(2+).

The catalysed reaction is L-histidinol + 2 NAD(+) + H2O = L-histidine + 2 NADH + 3 H(+). It functions in the pathway amino-acid biosynthesis; L-histidine biosynthesis; L-histidine from 5-phospho-alpha-D-ribose 1-diphosphate: step 9/9. In terms of biological role, catalyzes the sequential NAD-dependent oxidations of L-histidinol to L-histidinaldehyde and then to L-histidine. This is Histidinol dehydrogenase from Corynebacterium jeikeium (strain K411).